A 69-amino-acid chain; its full sequence is Conotoxin Lt5.7 (69 aa).

The first 19 residues, 1 to 19 (MLCLPVFIILLLLASPAAP), serve as a signal peptide directing secretion. A propeptide spanning residues 20–54 (KSLETRIQNDLIRAGLTDADLKTEKGFLSGLLNVA) is cleaved from the precursor.

The protein belongs to the conotoxin T superfamily. In terms of processing, contains 2 disulfide bonds that can be either 'C1-C3, C2-C4' or 'C1-C4, C2-C3', since these disulfide connectivities have been observed for conotoxins with cysteine framework V (for examples, see AC P0DQQ7 and AC P81755). As to expression, expressed by the venom duct.

Its subcellular location is the secreted. The protein is Conotoxin Lt5.7 of Conus litteratus (Lettered cone).